Consider the following 727-residue polypeptide: ABC transporter G family member STR2 (727 aa).

Topologically, residues 1-475 are cytoplasmic; it reads MKTQGLELET…NFTNIRRTPE (475 aa). The ABC transporter domain maps to 25 to 275; that stretch reads LEFESLTYTV…LNRMGRKIPK (251 aa). 69-76 contributes to the ATP binding site; that stretch reads GPSGAGKS. A helical transmembrane segment spans residues 476-496; sequence LFLSRLMVLTFMGVMMATMFH. The Extracellular portion of the chain corresponds to 497–510; sequence NPKNTLQGITNRLS. The helical transmembrane segment at 511-531 threads the bilayer; it reads FFIFTVCLFFFSSNDAVPAFI. At 532–559 the chain is on the cytoplasmic side; the sequence is QERFIFIRETSHNAYRASCYTIASLITH. The helical transmembrane segment at 560-580 threads the bilayer; sequence MPFLALQALAYAAIVWFALEL. Topologically, residues 581–583 are extracellular; the sequence is RGP. The chain crosses the membrane as a helical span at residues 584–604; the sequence is FIYFFLVLFISLLSTNSFVVF. Over 605–612 the chain is Cytoplasmic; it reads VSSIVPNY. Residues 613 to 633 traverse the membrane as a helical segment; that stretch reads ILGYAAVIAFTALFFLFCGYF. Over 634–699 the chain is Extracellular; it reads LSSEDIPLYW…GTEEIKKRNN (66 aa). N667 is a glycosylation site (N-linked (GlcNAc...) asparagine). The chain crosses the membrane as a helical span at residues 700–720; sequence VLIMLGWAVLYRILFYIILRF. Topologically, residues 721–727 are cytoplasmic; it reads ASKNQRS.

This sequence belongs to the ABC transporter superfamily. ABCG family. Stunted arbuscule (STR) subfamily. Heterodimerizes with STR; the resulting transporter is located in the peri-arbuscular membrane. As to expression, expressed constitutively in the vascular tissue of roots.

The protein resides in the cell membrane. Its function is as follows. Together with STR, required for arbuscule development in arbuscular mycorrhizal symbiosis. This chain is ABC transporter G family member STR2, found in Medicago truncatula (Barrel medic).